A 290-amino-acid chain; its full sequence is ATP synthase gamma chain (290 aa).

This sequence belongs to the ATPase gamma chain family. As to quaternary structure, F-type ATPases have 2 components, CF(1) - the catalytic core - and CF(0) - the membrane proton channel. CF(1) has five subunits: alpha(3), beta(3), gamma(1), delta(1), epsilon(1). CF(0) has three main subunits: a, b and c.

It localises to the cell inner membrane. In terms of biological role, produces ATP from ADP in the presence of a proton gradient across the membrane. The gamma chain is believed to be important in regulating ATPase activity and the flow of protons through the CF(0) complex. The chain is ATP synthase gamma chain from Paracoccus denitrificans (strain Pd 1222).